Reading from the N-terminus, the 284-residue chain is Gap junction beta-1 protein (284 aa).

Topologically, residues 1-22 (MNWTGLYTLLSGVNRHSTAIGR) are cytoplasmic. The helical transmembrane segment at 23–45 (VWLSVIFIFRIMVLVVAAESVWG) threads the bilayer. Over 46–75 (DEKSSFICNTLQPGCNSVCYDHFFPISHVR) the chain is Extracellular. The chain crosses the membrane as a helical span at residues 76–95 (LWSLQLILVSTPALLVAMHV). Over 96–130 (AHQQHIEKKMLRLEGHGDPLHLEEVKRHKVHISGT) the chain is Cytoplasmic. A helical transmembrane segment spans residues 131-153 (LWWTYVISVVFRLLFEAAFMYVF). Over 154–191 (YLLYPGYAMVRLVKCDAYPCPNTVDCFVSRPTEKTIFT) the chain is Extracellular. Residues 192-214 (VFMLAASGICIILNVAEVVYLIF) form a helical membrane-spanning segment. The Cytoplasmic segment spans residues 215-284 (RACARRAQRR…AEKSDRCSAC (70 aa)). Residues S233, S259, S267, and S278 each carry the phosphoserine modification.

Belongs to the connexin family. Beta-type (group I) subfamily. In terms of assembly, a connexon is composed of a hexamer of connexins. Interacts with CNST.

It localises to the cell membrane. The protein resides in the cell junction. The protein localises to the gap junction. One gap junction consists of a cluster of closely packed pairs of transmembrane channels, the connexons, through which materials of low MW diffuse from one cell to a neighboring cell. The protein is Gap junction beta-1 protein (GJB1) of Bos taurus (Bovine).